Here is a 317-residue protein sequence, read N- to C-terminus: Tumor-associated calcium signal transducer 2 (317 aa).

The first 24 residues, 1 to 24 (MARGLDLAPLLLLLLAMVAGFCTA), serve as a signal peptide directing secretion. Topologically, residues 25–270 (QINCTCPTNK…QFSMKRLTTG (246 aa)) are extracellular. A glycan (N-linked (GlcNAc...) asparagine) is linked at N27. A Thyroglobulin type-1 domain is found at 64–139 (TSKCLLLKAR…TDKGDQSLRC (76 aa)). Intrachain disulfides connect C67–C102, C113–C119, and C121–C139. N114 carries an N-linked (GlcNAc...) asparagine glycan. N-linked (GlcNAc...) asparagine glycans are attached at residues N162 and N202. A helical membrane pass occupies residues 271–291 (LIAVIAVVAVALVAGVVVLVV). The Cytoplasmic segment spans residues 292-317 (TNRRKSGKYKKVELKELGEMRSEPSL).

The protein belongs to the EPCAM family.

Its subcellular location is the membrane. Functionally, may function as a growth factor receptor. This is Tumor-associated calcium signal transducer 2 (Tacstd2) from Rattus norvegicus (Rat).